Consider the following 142-residue polypeptide: Organic hydroperoxide resistance protein-like 2 (142 aa).

It belongs to the OsmC/Ohr family.

The chain is Organic hydroperoxide resistance protein-like 2 from Staphylococcus epidermidis (strain ATCC 35984 / DSM 28319 / BCRC 17069 / CCUG 31568 / BM 3577 / RP62A).